Here is a 256-residue protein sequence, read N- to C-terminus: Protein FixA (256 aa).

This sequence belongs to the ETF beta-subunit/FixA family. In terms of assembly, heterodimer of FixA and FixB.

It participates in amine and polyamine metabolism; carnitine metabolism. Required for anaerobic carnitine reduction. May bring reductant to CaiA. The polypeptide is Protein FixA (Escherichia coli O17:K52:H18 (strain UMN026 / ExPEC)).